A 145-amino-acid polypeptide reads, in one-letter code: Maximins 5/H4 type 2 (145 aa).

An N-terminal signal peptide occupies residues 1-18 (MNFKYIVAVSFLIASAYA). Propeptides lie at residues 19-43 (RSVQ…REIR) and 74-124 (TAEE…KEKR). L144 bears the Leucine amide mark.

This sequence belongs to the bombinin family. Expressed by the skin glands.

It localises to the secreted. In terms of biological role, maximin-5 shows antibacterial activity against both Gram-positive and Gram-negative bacteria. The only exception is the resistance of E.coli. Also shows antimicrobial activity against fungi C.albicans, A.flavus and P.uticale. It has little hemolytic activity. It does not possess a significant cytotoxicity against tumor cell lines. It does not possess a significant anti-HIV activity. Maximin-H4 shows antibacterial activity against both Gram-positive and Gram-negative bacteria. It also shows antimicrobial activity against the fungus C.albicans. Shows strong hemolytic activity. This chain is Maximins 5/H4 type 2, found in Bombina maxima (Giant fire-bellied toad).